The following is a 379-amino-acid chain: Probable peptidoglycan glycosyltransferase FtsW (379 aa).

At Met1–Thr15 the chain is on the cytoplasmic side. Residues Leu16–Met36 form a helical membrane-spanning segment. Residues Pro37 to Arg52 lie on the Periplasmic side of the membrane. The helical transmembrane segment at Tyr53–Ala73 threads the bilayer. Residues Ser74–Ser79 are Cytoplasmic-facing. The chain crosses the membrane as a helical span at residues Ser80–Val100. Residues Asn101–Arg113 lie on the Periplasmic side of the membrane. Residues Ile114 to Val133 form a helical membrane-spanning segment. The Cytoplasmic portion of the chain corresponds to Arg134 to Val139. The chain crosses the membrane as a helical span at residues Arg140–Ala162. The Periplasmic segment spans residues Gln163–Asp165. A helical transmembrane segment spans residues Leu166 to Ala183. Over Glu184–Lys186 the chain is Cytoplasmic. The helical transmembrane segment at Ile187–Ala207 threads the bilayer. The Periplasmic portion of the chain corresponds to Lys208–Ser269. A helical transmembrane segment spans residues Ile270–Val290. Residues Ala291–Ala301 are Cytoplasmic-facing. The chain crosses the membrane as a helical span at residues Leu302–Phe322. At Gln323–Leu342 the chain is on the periplasmic side. The chain crosses the membrane as a helical span at residues Pro343 to Ile363. Topologically, residues Arg364–Arg379 are cytoplasmic.

This sequence belongs to the SEDS family. FtsW subfamily.

It is found in the cell inner membrane. The catalysed reaction is [GlcNAc-(1-&gt;4)-Mur2Ac(oyl-L-Ala-gamma-D-Glu-L-Lys-D-Ala-D-Ala)](n)-di-trans,octa-cis-undecaprenyl diphosphate + beta-D-GlcNAc-(1-&gt;4)-Mur2Ac(oyl-L-Ala-gamma-D-Glu-L-Lys-D-Ala-D-Ala)-di-trans,octa-cis-undecaprenyl diphosphate = [GlcNAc-(1-&gt;4)-Mur2Ac(oyl-L-Ala-gamma-D-Glu-L-Lys-D-Ala-D-Ala)](n+1)-di-trans,octa-cis-undecaprenyl diphosphate + di-trans,octa-cis-undecaprenyl diphosphate + H(+). It functions in the pathway cell wall biogenesis; peptidoglycan biosynthesis. Functionally, peptidoglycan polymerase that is essential for cell division. The protein is Probable peptidoglycan glycosyltransferase FtsW of Moranella endobia (strain PCIT).